The primary structure comprises 359 residues: Spermine synthase (359 aa).

The PABS domain occupies 53 to 304; sequence SGWFSEPHPR…GVIGFVLCST (252 aa). Gln99 is an S-adenosyl 3-(methylsulfanyl)propylamine binding site. Tyr129 provides a ligand contact to spermidine. Gln130 provides a ligand contact to S-adenosyl 3-(methylsulfanyl)propylamine. A spermidine-binding site is contributed by Asp154. S-adenosyl 3-(methylsulfanyl)propylamine contacts are provided by residues Glu174 and 205-206; that span reads DA. The active-site Proton acceptor is Asp224. Putrescine is bound at residue Tyr292.

This sequence belongs to the spermidine/spermine synthase family. In terms of assembly, heterodimer. Component of a multiprotein complex. Interacts with SPDSYN1 and SPDSYN2. As to expression, expressed predominantly in stem internodes, flower buds and roots.

The catalysed reaction is S-adenosyl 3-(methylsulfanyl)propylamine + spermidine = spermine + S-methyl-5'-thioadenosine + H(+). It participates in amine and polyamine biosynthesis; spermine biosynthesis; spermine from spermidine: step 1/1. The sequence is that of Spermine synthase (SPMS) from Arabidopsis thaliana (Mouse-ear cress).